Here is a 90-residue protein sequence, read N- to C-terminus: MSSLDKTMYFDFGANQPKDVHDTLVTVYQALEEKGYNPINQIVGYLLSGDPAYIPRIDDARNLIRKHERDEIIEELVRVYLNQNGSVKKS.

The protein belongs to the UPF0297 family.

This Levilactobacillus brevis (strain ATCC 367 / BCRC 12310 / CIP 105137 / JCM 1170 / LMG 11437 / NCIMB 947 / NCTC 947) (Lactobacillus brevis) protein is UPF0297 protein LVIS_1222.